The primary structure comprises 196 residues: ATP-dependent Clp protease proteolytic subunit (196 aa).

S96 functions as the Nucleophile in the catalytic mechanism. H121 is a catalytic residue.

It belongs to the peptidase S14 family. As to quaternary structure, fourteen ClpP subunits assemble into 2 heptameric rings which stack back to back to give a disk-like structure with a central cavity, resembling the structure of eukaryotic proteasomes.

It localises to the cytoplasm. It carries out the reaction Hydrolysis of proteins to small peptides in the presence of ATP and magnesium. alpha-casein is the usual test substrate. In the absence of ATP, only oligopeptides shorter than five residues are hydrolyzed (such as succinyl-Leu-Tyr-|-NHMec, and Leu-Tyr-Leu-|-Tyr-Trp, in which cleavage of the -Tyr-|-Leu- and -Tyr-|-Trp bonds also occurs).. Cleaves peptides in various proteins in a process that requires ATP hydrolysis. Has a chymotrypsin-like activity. Plays a major role in the degradation of misfolded proteins. In Streptococcus pneumoniae (strain P1031), this protein is ATP-dependent Clp protease proteolytic subunit.